The following is a 386-amino-acid chain: Galactokinase (386 aa).

35 to 38 (EHTD) contacts substrate. Residues serine 69 and 125–131 (GAGLSSS) each bind ATP. Residues serine 131 and glutamate 163 each coordinate Mg(2+). Aspartate 175 serves as the catalytic Proton acceptor. A substrate-binding site is contributed by tyrosine 224.

Belongs to the GHMP kinase family. GalK subfamily.

The protein resides in the cytoplasm. The catalysed reaction is alpha-D-galactose + ATP = alpha-D-galactose 1-phosphate + ADP + H(+). Its pathway is carbohydrate metabolism; galactose metabolism. In terms of biological role, catalyzes the transfer of the gamma-phosphate of ATP to D-galactose to form alpha-D-galactose-1-phosphate (Gal-1-P). This Vibrio vulnificus (strain YJ016) protein is Galactokinase.